Here is a 318-residue protein sequence, read N- to C-terminus: 4-hydroxy-3-methylbut-2-enyl diphosphate reductase (318 aa).

Cys12 is a [4Fe-4S] cluster binding site. (2E)-4-hydroxy-3-methylbut-2-enyl diphosphate contacts are provided by His41 and His74. Residues His41 and His74 each coordinate dimethylallyl diphosphate. Isopentenyl diphosphate contacts are provided by His41 and His74. Cys96 lines the [4Fe-4S] cluster pocket. His124 contacts (2E)-4-hydroxy-3-methylbut-2-enyl diphosphate. Residue His124 coordinates dimethylallyl diphosphate. His124 contributes to the isopentenyl diphosphate binding site. Residue Glu126 is the Proton donor of the active site. Thr167 provides a ligand contact to (2E)-4-hydroxy-3-methylbut-2-enyl diphosphate. Cys197 is a [4Fe-4S] cluster binding site. Ser225, Ser226, Asn227, and Ser269 together coordinate (2E)-4-hydroxy-3-methylbut-2-enyl diphosphate. Ser225, Ser226, Asn227, and Ser269 together coordinate dimethylallyl diphosphate. 4 residues coordinate isopentenyl diphosphate: Ser225, Ser226, Asn227, and Ser269.

It belongs to the IspH family. Requires [4Fe-4S] cluster as cofactor.

The enzyme catalyses isopentenyl diphosphate + 2 oxidized [2Fe-2S]-[ferredoxin] + H2O = (2E)-4-hydroxy-3-methylbut-2-enyl diphosphate + 2 reduced [2Fe-2S]-[ferredoxin] + 2 H(+). The catalysed reaction is dimethylallyl diphosphate + 2 oxidized [2Fe-2S]-[ferredoxin] + H2O = (2E)-4-hydroxy-3-methylbut-2-enyl diphosphate + 2 reduced [2Fe-2S]-[ferredoxin] + 2 H(+). It participates in isoprenoid biosynthesis; dimethylallyl diphosphate biosynthesis; dimethylallyl diphosphate from (2E)-4-hydroxy-3-methylbutenyl diphosphate: step 1/1. Its pathway is isoprenoid biosynthesis; isopentenyl diphosphate biosynthesis via DXP pathway; isopentenyl diphosphate from 1-deoxy-D-xylulose 5-phosphate: step 6/6. In terms of biological role, catalyzes the conversion of 1-hydroxy-2-methyl-2-(E)-butenyl 4-diphosphate (HMBPP) into a mixture of isopentenyl diphosphate (IPP) and dimethylallyl diphosphate (DMAPP). Acts in the terminal step of the DOXP/MEP pathway for isoprenoid precursor biosynthesis. This Francisella tularensis subsp. mediasiatica (strain FSC147) protein is 4-hydroxy-3-methylbut-2-enyl diphosphate reductase.